We begin with the raw amino-acid sequence, 405 residues long: Cytochrome P450 130 (405 aa).

Substrate contacts are provided by Asp93 and His97. Heme contacts are provided by Arg101, Gly243, Arg295, Tyr318, Ser348, His352, and Cys354.

Belongs to the cytochrome P450 family. Homodimer. The cofactor is heme.

The polypeptide is Cytochrome P450 130 (cyp130) (Mycobacterium tuberculosis (strain CDC 1551 / Oshkosh)).